A 430-amino-acid polypeptide reads, in one-letter code: GTPase Obg (430 aa).

Residues 1–158 (MFVDQVTISL…LDVTLELKLL (158 aa)) form the Obg domain. A disordered region spans residues 118-145 (RGGRGGRGNSRFATPRNPAPDFSENGEP). Residues 159-329 (ADVGLVGFPS…LLYAIADKLD (171 aa)) enclose the OBG-type G domain. Residues 165 to 172 (GFPSVGKS), 190 to 194 (FTTIK), 212 to 215 (DLPG), 282 to 285 (NKMD), and 310 to 312 (STI) each bind GTP. Residues Ser-172 and Thr-192 each coordinate Mg(2+). Positions 352 to 430 (KHTPSQDKFT…ILGGEFEFVE (79 aa)) constitute an OCT domain.

This sequence belongs to the TRAFAC class OBG-HflX-like GTPase superfamily. OBG GTPase family. Monomer. Requires Mg(2+) as cofactor.

The protein resides in the cytoplasm. In terms of biological role, an essential GTPase which binds GTP, GDP and possibly (p)ppGpp with moderate affinity, with high nucleotide exchange rates and a fairly low GTP hydrolysis rate. Plays a role in control of the cell cycle, stress response, ribosome biogenesis and in those bacteria that undergo differentiation, in morphogenesis control. In Staphylococcus haemolyticus (strain JCSC1435), this protein is GTPase Obg.